A 592-amino-acid chain; its full sequence is Protein kinase C zeta type (592 aa).

The 84-residue stretch at 15 to 98 folds into the PB1 domain; sequence RVRLKAHYGG…EVLIIHVFPS (84 aa). An interaction with SQSTM1 region spans residues 79-145; the sequence is AFRLACQGRD…KRFNRRAYCG (67 aa). The Phorbol-ester/DAG-type zinc-finger motif lies at 130–180; that stretch reads GHLFQAKRFNRRAYCGQCSERIWGLARQGYRCINCKLLVHKRCHVLVPLTC. Residues 252–518 form the Protein kinase domain; it reads FDLIRVIGRG…FSDIKSHAFF (267 aa). ATP-binding positions include 258–266 and Lys-281; that span reads IGRGSYAKV. Catalysis depends on Asp-376, which acts as the Proton acceptor. Thr-410 is subject to Phosphothreonine; by PDPK1 and PI3K. Residues 519 to 590 form the AGC-kinase C-terminal domain; sequence RSIDWDLLEK…INPLLLSAEE (72 aa). Position 560 is a phosphothreonine (Thr-560). At Ser-591 the chain carries Phosphoserine.

It belongs to the protein kinase superfamily. AGC Ser/Thr protein kinase family. PKC subfamily. As to quaternary structure, interacts with PARD6A, PARD6B and PARD6G. Part of a complex with PARD3, PARD6A or PARD6B or PARD6G and CDC42 or RAC1. Interacts with ADAP1/CENTA1. Forms a ternary complex with SQSTM1 and KCNAB2. Forms another ternary complex with SQSTM1 and GABRR3. Forms a complex with SQSTM1 and MAP2K5. Interacts (via the protein kinase domain) with WWC1. Forms a tripartite complex with WWC1 and DDR1, but predominantly in the absence of collagen. Component of the Par polarity complex, composed of at least phosphorylated PRKCZ, PARD3 and TIAM1. Interacts with PDPK1 (via N-terminal region). Interacts with WDFY2 (via WD repeats 1-3). Interacts with VAMP2. Forms a complex with WDFY2 and VAMP2. Interacts with APPL1. Interacts with WWC1, WWC2 and WWC3. In terms of processing, CDH5 is required for its phosphorylation at Thr-410. Phosphorylated by protein kinase PDPK1; phosphorylation is inhibited by the apoptotic C-terminal cleavage product of PKN2. Phosphorylation at Thr-410 by PI3K activates the kinase. In terms of tissue distribution, isoform 1: In brain, expressed in hippocampus, neocortex and cerebellum (at protein level). Also expressed in lung, liver, kidney, testis and to a lesser extent in pancreas, intestine and skin (at protein level). Isoform 2: Specifically expressed in brain where it localizes to the hippocampus, neocortex and cerebellum (at protein level).

The protein resides in the cytoplasm. It is found in the endosome. The protein localises to the cell junction. It localises to the membrane. The enzyme catalyses L-seryl-[protein] + ATP = O-phospho-L-seryl-[protein] + ADP + H(+). The catalysed reaction is L-threonyl-[protein] + ATP = O-phospho-L-threonyl-[protein] + ADP + H(+). With respect to regulation, atypical PKCs (PRKCI and PRKCZ) exhibit an elevated basal enzymatic activity (that may be due to the interaction with SMG1 or SQSTM1) and are not regulated by diacylglycerol, phosphatidylserine, phorbol esters or calcium ions. Two specific sites, Thr-410 (activation loop of the kinase domain) and Thr-560 (turn motif), need to be phosphorylated for its full activation. Phosphatidylinositol 3,4,5-trisphosphate might be a physiological activator. Isoform 2: Constitutively active. Its function is as follows. Calcium- and diacylglycerol-independent serine/threonine-protein kinase that functions in phosphatidylinositol 3-kinase (PI3K) pathway and mitogen-activated protein (MAP) kinase cascade, and is involved in NF-kappa-B activation, mitogenic signaling, cell proliferation, cell polarity, inflammatory response and maintenance of long-term potentiation (LTP). Upon lipopolysaccharide (LPS) treatment in macrophages, or following mitogenic stimuli, functions downstream of PI3K to activate MAP2K1/MEK1-MAPK1/ERK2 signaling cascade independently of RAF1 activation. Required for insulin-dependent activation of AKT3, but may function as an adapter rather than a direct activator. Upon insulin treatment may act as a downstream effector of PI3K and contribute to the activation of translocation of the glucose transporter SLC2A4/GLUT4 and subsequent glucose transport in adipocytes. In EGF-induced cells, binds and activates MAP2K5/MEK5-MAPK7/ERK5 independently of its kinase activity and can activate JUN promoter through MEF2C. Through binding with SQSTM1/p62, functions in interleukin-1 signaling and activation of NF-kappa-B with the specific adapters RIPK1 and TRAF6. Participates in TNF-dependent transactivation of NF-kappa-B by phosphorylating and activating IKBKB kinase, which in turn leads to the degradation of NF-kappa-B inhibitors. In migrating astrocytes, forms a cytoplasmic complex with PARD6A and is recruited by CDC42 to function in the establishment of cell polarity along with the microtubule motor and dynein. In association with FEZ1, stimulates neuronal differentiation in PC12 cells. In the inflammatory response, is required for the T-helper 2 (Th2) differentiation process, including interleukin production, efficient activation of JAK1 and the subsequent phosphorylation and nuclear translocation of STAT6. May be involved in development of allergic airway inflammation (asthma), a process dependent on Th2 immune response. In the NF-kappa-B-mediated inflammatory response, can relieve SETD6-dependent repression of NF-kappa-B target genes by phosphorylating the RELA subunit at 'Ser-311'. Phosphorylates VAMP2 in vitro. Phosphorylates and activates LRRK1, which phosphorylates RAB proteins involved in intracellular trafficking. In terms of biological role, involved in late synaptic long term potentiation phase in CA1 hippocampal cells and long term memory maintenance. The polypeptide is Protein kinase C zeta type (Prkcz) (Rattus norvegicus (Rat)).